Consider the following 458-residue polypeptide: Argininosuccinate lyase (458 aa).

It belongs to the lyase 1 family. Argininosuccinate lyase subfamily.

The protein resides in the cytoplasm. It carries out the reaction 2-(N(omega)-L-arginino)succinate = fumarate + L-arginine. The protein operates within amino-acid biosynthesis; L-arginine biosynthesis; L-arginine from L-ornithine and carbamoyl phosphate: step 3/3. The chain is Argininosuccinate lyase from Lachnospira eligens (strain ATCC 27750 / DSM 3376 / VPI C15-48 / C15-B4) (Eubacterium eligens).